A 330-amino-acid chain; its full sequence is CRISPR-associated endonuclease Cas1 (330 aa).

Residues glutamate 154, histidine 222, and glutamate 237 each contribute to the Mn(2+) site.

It belongs to the CRISPR-associated endonuclease Cas1 family. As to quaternary structure, homodimer, forms a heterotetramer with a Cas2 homodimer. Mg(2+) serves as cofactor. The cofactor is Mn(2+).

Functionally, CRISPR (clustered regularly interspaced short palindromic repeat), is an adaptive immune system that provides protection against mobile genetic elements (viruses, transposable elements and conjugative plasmids). CRISPR clusters contain spacers, sequences complementary to antecedent mobile elements, and target invading nucleic acids. CRISPR clusters are transcribed and processed into CRISPR RNA (crRNA). Acts as a dsDNA endonuclease. Involved in the integration of spacer DNA into the CRISPR cassette. The polypeptide is CRISPR-associated endonuclease Cas1 (Clostridium perfringens (strain SM101 / Type A)).